Here is a 652-residue protein sequence, read N- to C-terminus: DNA ligase (652 aa).

Residues 29-33 (DSEYD), 78-79 (SL), and glutamate 107 contribute to the NAD(+) site. Residue lysine 109 is the N6-AMP-lysine intermediate of the active site. NAD(+) is bound by residues arginine 130, glutamate 164, lysine 278, and lysine 302. Cysteine 395, cysteine 398, cysteine 413, and cysteine 418 together coordinate Zn(2+). The BRCT domain maps to 577 to 652 (VADAALSGLT…VRDEAWLESL (76 aa)).

Belongs to the NAD-dependent DNA ligase family. LigA subfamily. Requires Mg(2+) as cofactor. The cofactor is Mn(2+).

The enzyme catalyses NAD(+) + (deoxyribonucleotide)n-3'-hydroxyl + 5'-phospho-(deoxyribonucleotide)m = (deoxyribonucleotide)n+m + AMP + beta-nicotinamide D-nucleotide.. Functionally, DNA ligase that catalyzes the formation of phosphodiester linkages between 5'-phosphoryl and 3'-hydroxyl groups in double-stranded DNA using NAD as a coenzyme and as the energy source for the reaction. It is essential for DNA replication and repair of damaged DNA. This Streptococcus pneumoniae (strain Taiwan19F-14) protein is DNA ligase.